Consider the following 507-residue polypeptide: Cytochrome P450 71D2 (507 aa).

The next 2 membrane-spanning stretches (helical) occupy residues 6–26 (LPFN…LIYG) and 447–467 (ICPG…LLLY). Cysteine 448 is a heme binding site.

This sequence belongs to the cytochrome P450 family.

It is found in the membrane. In Catharanthus roseus (Madagascar periwinkle), this protein is Cytochrome P450 71D2.